A 72-amino-acid chain; its full sequence is Translation initiation factor IF-1 (72 aa).

Positions M1–R72 constitute an S1-like domain.

This sequence belongs to the IF-1 family. As to quaternary structure, component of the 30S ribosomal translation pre-initiation complex which assembles on the 30S ribosome in the order IF-2 and IF-3, IF-1 and N-formylmethionyl-tRNA(fMet); mRNA recruitment can occur at any time during PIC assembly.

Its subcellular location is the cytoplasm. Functionally, one of the essential components for the initiation of protein synthesis. Stabilizes the binding of IF-2 and IF-3 on the 30S subunit to which N-formylmethionyl-tRNA(fMet) subsequently binds. Helps modulate mRNA selection, yielding the 30S pre-initiation complex (PIC). Upon addition of the 50S ribosomal subunit IF-1, IF-2 and IF-3 are released leaving the mature 70S translation initiation complex. The polypeptide is Translation initiation factor IF-1 (Shewanella amazonensis (strain ATCC BAA-1098 / SB2B)).